Reading from the N-terminus, the 581-residue chain is Oligo-1,6-glucosidase IMA5 (581 aa).

Catalysis depends on Asp210, which acts as the Nucleophile. Glu272 (proton donor) is an active-site residue.

Belongs to the glycosyl hydrolase 13 family.

It carries out the reaction Hydrolysis of (1-&gt;6)-alpha-D-glucosidic linkages in some oligosaccharides produced from starch and glycogen by alpha-amylase, and in isomaltose.. Alpha-glucosidase with specificity for isomaltose, maltose, and palatinose. The chain is Oligo-1,6-glucosidase IMA5 (IMA5) from Saccharomyces cerevisiae (strain ATCC 204508 / S288c) (Baker's yeast).